A 136-amino-acid polypeptide reads, in one-letter code: MRVIDASGAIYGRLSAYVAKRLLEGEEITIVNASKAVITGNKEFIIEKFKERLDIGSVRKGPYYPKTPENILRRSIGDMLPKKITKGKEALARCRVYRNTPPDIEKEKVEKVDGVVTDKVSGIITLGDLSKELGGY.

The protein belongs to the universal ribosomal protein uL13 family. In terms of assembly, part of the 50S ribosomal subunit.

Its function is as follows. This protein is one of the early assembly proteins of the 50S ribosomal subunit, although it is not seen to bind rRNA by itself. It is important during the early stages of 50S assembly. The polypeptide is Large ribosomal subunit protein uL13 (Thermoplasma acidophilum (strain ATCC 25905 / DSM 1728 / JCM 9062 / NBRC 15155 / AMRC-C165)).